Here is a 372-residue protein sequence, read N- to C-terminus: Spermidine/putrescine import ATP-binding protein PotA (372 aa).

An ABC transporter domain is found at 11 to 241 (IELRSIKKSY…PANLFVARFI (231 aa)). 43 to 50 (GPSGCGKT) contributes to the ATP binding site.

It belongs to the ABC transporter superfamily. Spermidine/putrescine importer (TC 3.A.1.11.1) family. The complex is composed of two ATP-binding proteins (PotA), two transmembrane proteins (PotB and PotC) and a solute-binding protein (PotD).

The protein resides in the cell inner membrane. The enzyme catalyses ATP + H2O + polyamine-[polyamine-binding protein]Side 1 = ADP + phosphate + polyamineSide 2 + [polyamine-binding protein]Side 1.. In terms of biological role, part of the ABC transporter complex PotABCD involved in spermidine/putrescine import. Responsible for energy coupling to the transport system. The polypeptide is Spermidine/putrescine import ATP-binding protein PotA (Haemophilus influenzae (strain ATCC 51907 / DSM 11121 / KW20 / Rd)).